Reading from the N-terminus, the 265-residue chain is Undecaprenyl-diphosphatase (265 aa).

Helical transmembrane passes span 42 to 62, 90 to 110, 115 to 135, 160 to 182, 195 to 215, 222 to 242, and 245 to 265; these read EAIP…IVYF, ISFL…LLLF, VEIS…VTGI, VAQG…ALLL, FLMS…MGMV, IVGL…FLKV, and KVDF…TMFL.

This sequence belongs to the UppP family.

The protein localises to the cell membrane. The catalysed reaction is di-trans,octa-cis-undecaprenyl diphosphate + H2O = di-trans,octa-cis-undecaprenyl phosphate + phosphate + H(+). Its function is as follows. Catalyzes the dephosphorylation of undecaprenyl diphosphate (UPP). This is Undecaprenyl-diphosphatase from Methanococcoides burtonii (strain DSM 6242 / NBRC 107633 / OCM 468 / ACE-M).